A 510-amino-acid polypeptide reads, in one-letter code: Crotonobetaine/carnitine--CoA ligase (510 aa).

This sequence belongs to the ATP-dependent AMP-binding enzyme family.

It carries out the reaction 4-(trimethylamino)butanoate + ATP + CoA = 4-(trimethylamino)butanoyl-CoA + AMP + diphosphate. It catalyses the reaction crotonobetaine + ATP + CoA = crotonobetainyl-CoA + AMP + diphosphate. The catalysed reaction is (R)-carnitine + ATP + CoA = (R)-carnitinyl-CoA + AMP + diphosphate. Its pathway is amine and polyamine metabolism; carnitine metabolism. Its function is as follows. Catalyzes the transfer of CoA to carnitine, generating the initial carnitinyl-CoA needed for the CaiB reaction cycle. Also has activity toward crotonobetaine and gamma-butyrobetaine. In Shigella flexneri serotype 5b (strain 8401), this protein is Crotonobetaine/carnitine--CoA ligase.